Consider the following 251-residue polypeptide: Putative deaminase AgaI (251 aa).

Asp86 functions as the Proton acceptor; for enolization step in the catalytic mechanism. Residue Asn154 is the For ring-opening step of the active site. The active-site Proton acceptor; for ring-opening step is the His156. Residue Glu161 is the For ring-opening step of the active site.

This sequence belongs to the glucosamine/galactosamine-6-phosphate isomerase family.

The sequence is that of Putative deaminase AgaI (agaI) from Escherichia coli (strain K12).